The sequence spans 378 residues: Ribosomal RNA large subunit methyltransferase G (378 aa).

The protein belongs to the methyltransferase superfamily. RlmG family.

It localises to the cytoplasm. The catalysed reaction is guanosine(1835) in 23S rRNA + S-adenosyl-L-methionine = N(2)-methylguanosine(1835) in 23S rRNA + S-adenosyl-L-homocysteine + H(+). Specifically methylates the guanine in position 1835 (m2G1835) of 23S rRNA. This is Ribosomal RNA large subunit methyltransferase G from Salmonella dublin (strain CT_02021853).